Consider the following 288-residue polypeptide: Acetyl-coenzyme A carboxylase carboxyl transferase subunit beta (288 aa).

Positions leucine 34–glutamine 288 constitute a CoA carboxyltransferase N-terminal domain. The Zn(2+) site is built by cysteine 38, cysteine 41, cysteine 56, and cysteine 59. The C4-type zinc-finger motif lies at cysteine 38–cysteine 59.

The protein belongs to the AccD/PCCB family. As to quaternary structure, acetyl-CoA carboxylase is a heterohexamer composed of biotin carboxyl carrier protein (AccB), biotin carboxylase (AccC) and two subunits each of ACCase subunit alpha (AccA) and ACCase subunit beta (AccD). It depends on Zn(2+) as a cofactor.

It is found in the cytoplasm. The enzyme catalyses N(6)-carboxybiotinyl-L-lysyl-[protein] + acetyl-CoA = N(6)-biotinyl-L-lysyl-[protein] + malonyl-CoA. It functions in the pathway lipid metabolism; malonyl-CoA biosynthesis; malonyl-CoA from acetyl-CoA: step 1/1. Its function is as follows. Component of the acetyl coenzyme A carboxylase (ACC) complex. Biotin carboxylase (BC) catalyzes the carboxylation of biotin on its carrier protein (BCCP) and then the CO(2) group is transferred by the transcarboxylase to acetyl-CoA to form malonyl-CoA. The sequence is that of Acetyl-coenzyme A carboxylase carboxyl transferase subunit beta from Streptococcus pyogenes serotype M49 (strain NZ131).